Reading from the N-terminus, the 374-residue chain is Dihydrolipoyllysine-residue acetyltransferase component of acetoin cleaving system (374 aa).

A Lipoyl-binding domain is found at 9–84; sequence IIPIVMPKWG…PVKALLGVLA (76 aa). An N6-lipoyllysine modification is found at lysine 50. An AB hydrolase-1 domain is found at 137-360; the sequence is TVLFIHGFGG…DAGHMSQMEK (224 aa).

(R)-lipoate is required as a cofactor.

The catalysed reaction is N(6)-[(R)-dihydrolipoyl]-L-lysyl-[protein] + acetyl-CoA = N(6)-[(R)-S(8)-acetyldihydrolipoyl]-L-lysyl-[protein] + CoA. It functions in the pathway ketone degradation; acetoin degradation. Dihydrolipoamide acetyltransferase involved in acetoin catabolism. This is Dihydrolipoyllysine-residue acetyltransferase component of acetoin cleaving system (acoC) from Cupriavidus necator (strain ATCC 17699 / DSM 428 / KCTC 22496 / NCIMB 10442 / H16 / Stanier 337) (Ralstonia eutropha).